Reading from the N-terminus, the 300-residue chain is Haloalkane dehalogenase (300 aa).

One can recognise an AB hydrolase-1 domain in the interval 32–155; it reads AIVFQHGNPT…PAVRGVFQGF (124 aa). Residue aspartate 109 is the Nucleophile of the active site. Glutamate 133 (proton donor) is an active-site residue. Histidine 273 functions as the Proton acceptor in the catalytic mechanism.

The protein belongs to the haloalkane dehalogenase family. Type 2 subfamily. Monomer.

The catalysed reaction is 1-haloalkane + H2O = a halide anion + a primary alcohol + H(+). Catalyzes hydrolytic cleavage of carbon-halogen bonds in halogenated aliphatic compounds, leading to the formation of the corresponding primary alcohols, halide ions and protons. This chain is Haloalkane dehalogenase, found in Mycobacterium tuberculosis (strain ATCC 25177 / H37Ra).